The primary structure comprises 317 residues: Coproporphyrinogen-III oxidase, aerobic 1 (317 aa).

The segment at 38–47 (VLRDGAIFEQ) is important for dimerization. Residue Ser-82 participates in substrate binding. The active-site Proton donor is the His-96. Residues 98 to 100 (NYR) and 269 to 274 (NGRTES) each bind substrate. Residues 251-286 (YVEFNLVYDRGTIFGLQTNGRTESILMSLPPLVRWE) form an important for dimerization region.

It belongs to the aerobic coproporphyrinogen-III oxidase family. As to quaternary structure, homodimer.

The protein localises to the cytoplasm. The enzyme catalyses coproporphyrinogen III + O2 + 2 H(+) = protoporphyrinogen IX + 2 CO2 + 2 H2O. Its pathway is porphyrin-containing compound metabolism; protoporphyrin-IX biosynthesis; protoporphyrinogen-IX from coproporphyrinogen-III (O2 route): step 1/1. Functionally, key enzyme in heme biosynthesis. Catalyzes the oxidative decarboxylation of propionic acid side chains of rings A and B of coproporphyrinogen III. In Nostoc sp. (strain PCC 7120 / SAG 25.82 / UTEX 2576), this protein is Coproporphyrinogen-III oxidase, aerobic 1.